An 817-amino-acid chain; its full sequence is Dual specificity tyrosine-phosphorylation-regulated kinase mbk-2 (817 aa).

Disordered stretches follow at residues 1–46 (MAAL…HECP), 70–148 (PTSF…GPLG), 186–206 (GSYE…GSQQ), and 301–396 (LPNV…FRPE). Positions 7–25 (FTRNSRSYGQQPIDVTQQG) are enriched in polar residues. Composition is skewed to low complexity over residues 70-81 (PTSFSGASSSSS) and 97-111 (NLLG…SNSL). 2 stretches are compositionally biased toward polar residues: residues 122-143 (SGNT…TNNL) and 193-206 (GQAQ…GSQQ). Over residues 303–318 (NVGTSSSNGSSNSSSG) the composition is skewed to low complexity. The span at 327–351 (LMTQSIGGPNKHLSASHSTLNTAST) shows a compositional bias: polar residues. Ser362 bears the Phosphoserine; by cdk-1 mark. Residues 364–392 (SNESLSRSHTSSSGGSQGGHNSNSGSNSG) are compositionally biased toward low complexity. Residues 461–774 (YEVLKVIGKG…PAQALKHKWL (314 aa)) enclose the Protein kinase domain. Residues 467–475 (IGKGSFGQV) and Lys490 each bind ATP. Asp587 (proton acceptor) is an active-site residue. Tyr621 is subject to Phosphotyrosine; by autocatalysis.

Belongs to the protein kinase superfamily. CMGC Ser/Thr protein kinase family. MNB/DYRK subfamily. Part of a complex, consisting of pseudophosphatases egg-3, egg-4, egg-5 and kinase mbk-2; this complex is required for the oocyte-to-zygote transition. Interacts (via Tyr-619 and Tyr-621) with egg-4 (via tyrosine-protein phosphatase domain) and egg-5 (via tyrosine-protein phosphatase domain); mbk-2 tyrosine phosphorylation enhances the interaction. The interaction inhibits mbk-2 kinase activity and is required for mbk-2 oocyte cortex localization. Interacts (via N-terminus) with egg-3 (via tyrosine-protein phosphatase domain); the interaction does not affect mbk-2 kinase activity, is enhanced by mbk-2 tyrosine phosphorylation status and requires prior binding of mbk-2 to egg-4 and egg-5. Mg(2+) serves as cofactor. Autophosphorylated. In L1 larvae, expressed widely in the nervous system, including head neurons and the ventral nerve cord. In adult animals, continues to be expressed in the nervous system and is also expressed in body wall muscle.

The protein resides in the cytoplasm. The protein localises to the cell cortex. The catalysed reaction is L-seryl-[protein] + ATP = O-phospho-L-seryl-[protein] + ADP + H(+). It carries out the reaction L-threonyl-[protein] + ATP = O-phospho-L-threonyl-[protein] + ADP + H(+). It catalyses the reaction L-tyrosyl-[protein] + ATP = O-phospho-L-tyrosyl-[protein] + ADP + H(+). Activated during oocyte maturation by phosphorylation on Ser-362 by cdk-1. The pseudotyrosine phosphatases egg-4 and egg-5 sequester activated mbk-2 until the meiotic divisions and inhibit mbk-2 kinase activity directly, using a mixed-inhibition mechanism that does not involve tyrosine dephosphorylation. Its function is as follows. Required for oocyte-to-zygote transition in which it phosphorylates oocyte proteins, including mei-1, oma-1, oma-2, mex-5, and mex-6, modifying their activity and/or stability following meiosis. Through phosphorylation of P granule components including meg-1, promotes the disassembly of zygotic P granules in the anterior cytoplasm during zygote polarization, and thus plays a role in P granule distribution and segregation in early stage embryos following meiosis. Functions in both spindle positioning and in the posterior localization of cytoplasmic determinants, including pie-1, pos-1, and pgl-1, in early embryos. Involved in the asymmetric distribution of plk-1 at the 2-cell embryonic stage. The protein is Dual specificity tyrosine-phosphorylation-regulated kinase mbk-2 of Caenorhabditis elegans.